Here is a 763-residue protein sequence, read N- to C-terminus: Photosystem I P700 chlorophyll a apoprotein A1 (763 aa).

The next 8 membrane-spanning stretches (helical) occupy residues 72–95 (IFSA…FHGA), 158–181 (LYVT…FHYH), 197–221 (LNHH…HVSL), 305–323 (TAHH…GHMY), 360–383 (WHAQ…HHMY), 399–425 (LSLF…IFMV), 447–469 (AIIS…LYIH), and 544–562 (FMVH…LILL). Positions 586 and 595 each coordinate [4Fe-4S] cluster. 2 helical membrane-spanning segments follow: residues 602–623 (HVFL…HYSW) and 677–699 (TSAY…MFLF). His688 is a chlorophyll a' binding site. 2 residues coordinate chlorophyll a: Met696 and Tyr704. Position 705 (Trp705) interacts with phylloquinone. The helical transmembrane segment at 737 to 757 (AVGVAHYLLGGIVTTWSFFLA) threads the bilayer.

The protein belongs to the PsaA/PsaB family. The PsaA/B heterodimer binds the P700 chlorophyll special pair and subsequent electron acceptors. PSI consists of a core antenna complex that captures photons, and an electron transfer chain that converts photonic excitation into a charge separation. The cyanobacterial PSI reaction center is composed of one copy each of PsaA,B,C,D,E,F,I,J,K,L,M and X, and forms trimeric complexes. PSI electron transfer chain: 5 chlorophyll a, 1 chlorophyll a', 2 phylloquinones and 3 4Fe-4S clusters. PSI core antenna: 90 chlorophyll a, 22 carotenoids, 3 phospholipids and 1 galactolipid. P700 is a chlorophyll a/chlorophyll a' dimer, A0 is one or more chlorophyll a, A1 is one or both phylloquinones and FX is a shared 4Fe-4S iron-sulfur center. is required as a cofactor.

It localises to the cellular thylakoid membrane. It carries out the reaction reduced [plastocyanin] + hnu + oxidized [2Fe-2S]-[ferredoxin] = oxidized [plastocyanin] + reduced [2Fe-2S]-[ferredoxin]. PsaA and PsaB bind P700, the primary electron donor of photosystem I (PSI), as well as the electron acceptors A0, A1 and FX. PSI is a plastocyanin/cytochrome c6-ferredoxin oxidoreductase, converting photonic excitation into a charge separation, which transfers an electron from the donor P700 chlorophyll pair to the spectroscopically characterized acceptors A0, A1, FX, FA and FB in turn. Oxidized P700 is reduced on the lumenal side of the thylakoid membrane by plastocyanin or cytochrome c6. The chain is Photosystem I P700 chlorophyll a apoprotein A1 from Synechococcus elongatus (strain ATCC 33912 / PCC 7942 / FACHB-805) (Anacystis nidulans R2).